The sequence spans 326 residues: Dehydrogenase/reductase SDR family protein 7-like (326 aa).

The Cytoplasmic portion of the chain corresponds to 1–17 (MKVQDMDKCAPSSDWNV). Residues 18-38 (LYWVLGTVLMPVALPLAIINI) traverse the membrane as a helical; Signal-anchor for type II membrane protein segment. Over 39-326 (WQRFQAQKFR…KLENAEKKST (288 aa)) the chain is Peroxisomal. 57 to 81 (LITGASSGLGESLAHVFYRAGCRVI) is an NAD(+) binding site. Ser193 provides a ligand contact to substrate. Tyr206 acts as the Proton acceptor in catalysis.

Belongs to the short-chain dehydrogenases/reductases (SDR) family.

The protein localises to the peroxisome membrane. Functionally, putative oxidoreductase. The chain is Dehydrogenase/reductase SDR family protein 7-like from Drosophila melanogaster (Fruit fly).